A 546-amino-acid polypeptide reads, in one-letter code: Probable ATP-dependent RNA helicase DDX56 (546 aa).

The Q motif signature appears at 7 to 35; that stretch reads LGFEHMGLDPRLLQAVTDLGWSRPTLIQE. The Helicase ATP-binding domain occupies 38-218; that stretch reads IPLALEGKDL…ELVLHNPVTL (181 aa). Residue 51–58 participates in ATP binding; it reads ARTGSGKT. At serine 126 the chain carries Phosphoserine. Threonine 141 carries the post-translational modification Phosphothreonine. A DEAD box motif is present at residues 166 to 169; it reads DEAD. Residues 230–424 enclose the Helicase C-terminal domain; that stretch reads QLQQFQVVCE…PYQFQMEEIE (195 aa). Disordered regions lie at residues 324-344 and 508-546; these read VKGK…PESG and RKKR…AKPS. 3 stretches are compositionally biased toward basic residues: residues 325-334, 508-524, and 532-546; these read KGKRRGRGSK, RKKR…KKVK, and FKHR…AKPS.

This sequence belongs to the DEAD box helicase family. DDX56/DBP9 subfamily. May form homooligomeric complexes. Interacts with IRF3. Interacts with OCT4 and POU5F1.

It is found in the nucleus. The protein resides in the nucleolus. The catalysed reaction is ATP + H2O = ADP + phosphate + H(+). In terms of biological role, nucleolar RNA helicase that plays a role in various biological processes including innate immunity, ribosome biogenesis or nucleolus organization. Plays an essential role in maintaining nucleolar integrity in planarian stem cells. Maintains embryonic stem cells proliferation by conventional regulation of ribosome assembly and interaction with OCT4 and POU5F1 complex. Regulates antiviral innate immunity by inhibiting the virus-triggered signaling nuclear translocation of IRF3. Mechanistically, acts by disrupting the interaction between IRF3 and importin IPO5. May play a role in later stages of the processing of the pre-ribosomal particles leading to mature 60S ribosomal subunits. Has intrinsic ATPase activity. This chain is Probable ATP-dependent RNA helicase DDX56 (Ddx56), found in Mus musculus (Mouse).